We begin with the raw amino-acid sequence, 368 residues long: Aminomethyltransferase (368 aa).

This sequence belongs to the GcvT family. The glycine cleavage system is composed of four proteins: P, T, L and H.

The enzyme catalyses N(6)-[(R)-S(8)-aminomethyldihydrolipoyl]-L-lysyl-[protein] + (6S)-5,6,7,8-tetrahydrofolate = N(6)-[(R)-dihydrolipoyl]-L-lysyl-[protein] + (6R)-5,10-methylene-5,6,7,8-tetrahydrofolate + NH4(+). Its function is as follows. The glycine cleavage system catalyzes the degradation of glycine. The polypeptide is Aminomethyltransferase (Xylella fastidiosa (strain M23)).